The sequence spans 63 residues: Anionic peptide NDBP7 (63 aa).

The first 20 residues, methionine 1–alanine 20, serve as a signal peptide directing secretion.

It belongs to the non-disulfide-bridged peptide (NDBP) superfamily. Long chain multifunctional peptide (group 2) family. In terms of tissue distribution, expressed by the venom gland.

The protein localises to the secreted. The protein is Anionic peptide NDBP7 of Lychas mucronatus (Chinese swimming scorpion).